Reading from the N-terminus, the 165-residue chain is Nucleotide-binding protein Ccur92_01650 (165 aa).

The protein belongs to the YajQ family.

Nucleotide-binding protein. This is Nucleotide-binding protein Ccur92_01650 from Campylobacter curvus (strain 525.92).